Reading from the N-terminus, the 855-residue chain is Coiled-coil domain-containing protein 87 (855 aa).

Disordered stretches follow at residues 23-43 and 278-302; these read LFPS…QDAT and SRPS…PTSP. The segment covering 287–296 has biased composition (low complexity); sequence PSHSPSSESH. 2 coiled-coil regions span residues 387–413 and 764–789; these read TRRL…EASG and RSYL…ESVF.

The protein belongs to the CCDC87 family. Specifically expressed in testis (at protein level). Not detected in other tissues tested (at protein level). In the testis, localizes to pachytene spermatocytes and spermatids.

Its function is as follows. Plays a role in spermatogenesis, where it is important for normal sperm head morphology. Also required for the acrosome reaction and thus normal male fertility. The chain is Coiled-coil domain-containing protein 87 (Ccdc87) from Mus musculus (Mouse).